The chain runs to 476 residues: Serine/threonine-protein kinase PknF (476 aa).

The region spanning 12–279 (FTIVRQLGSG…FARALGHRLG (268 aa)) is the Protein kinase domain. ATP contacts are provided by residues 18-26 (LGSGGMGEV) and lysine 41. Aspartate 137 functions as the Proton acceptor in the catalytic mechanism. The chain crosses the membrane as a helical span at residues 306–326 (TAVIVPAVLAMLLVMAVAVAV). The tract at residues 332-376 (ADDERAAQPARTRTTTSAGTTTSVAPASTTRPAPTTPTTTGAADT) is disordered. The segment covering 338 to 376 (AQPARTRTTTSAGTTTSVAPASTTRPAPTTPTTTGAADT) has biased composition (low complexity).

This sequence belongs to the protein kinase superfamily. Ser/Thr protein kinase family. In terms of processing, autophosphorylated. Dephosphorylated by PstP.

The protein localises to the cell membrane. It catalyses the reaction L-seryl-[protein] + ATP = O-phospho-L-seryl-[protein] + ADP + H(+). It carries out the reaction L-threonyl-[protein] + ATP = O-phospho-L-threonyl-[protein] + ADP + H(+). Its function is as follows. A serine/threonine-protein kinase, acts on HupB in vitro. The chain is Serine/threonine-protein kinase PknF from Mycobacterium tuberculosis (strain ATCC 25177 / H37Ra).